A 92-amino-acid polypeptide reads, in one-letter code: CRISPR-associated endoribonuclease Cas2 2 (92 aa).

Asp12 lines the Mg(2+) pocket.

The protein belongs to the CRISPR-associated endoribonuclease Cas2 protein family. As to quaternary structure, homodimer, forms a heterotetramer with a Cas1 homodimer. The cofactor is Mg(2+).

Its function is as follows. CRISPR (clustered regularly interspaced short palindromic repeat), is an adaptive immune system that provides protection against mobile genetic elements (viruses, transposable elements and conjugative plasmids). CRISPR clusters contain sequences complementary to antecedent mobile elements and target invading nucleic acids. CRISPR clusters are transcribed and processed into CRISPR RNA (crRNA). Functions as a ssRNA-specific endoribonuclease. Involved in the integration of spacer DNA into the CRISPR cassette. This chain is CRISPR-associated endoribonuclease Cas2 2 (cas22), found in Archaeoglobus fulgidus (strain ATCC 49558 / DSM 4304 / JCM 9628 / NBRC 100126 / VC-16).